Consider the following 213-residue polypeptide: Glycerol-3-phosphate acyltransferase (213 aa).

5 consecutive transmembrane segments (helical) span residues 3–23 (ILLA…VVVS), 51–71 (KAAI…VWLA), 78–98 (DVAI…PVFF), 115–135 (AVHP…AFFF), and 140–160 (LAAL…FGMP).

It belongs to the PlsY family. In terms of assembly, probably interacts with PlsX.

Its subcellular location is the cell inner membrane. It catalyses the reaction an acyl phosphate + sn-glycerol 3-phosphate = a 1-acyl-sn-glycero-3-phosphate + phosphate. The protein operates within lipid metabolism; phospholipid metabolism. In terms of biological role, catalyzes the transfer of an acyl group from acyl-phosphate (acyl-PO(4)) to glycerol-3-phosphate (G3P) to form lysophosphatidic acid (LPA). This enzyme utilizes acyl-phosphate as fatty acyl donor, but not acyl-CoA or acyl-ACP. This Burkholderia cenocepacia (strain HI2424) protein is Glycerol-3-phosphate acyltransferase.